A 198-amino-acid polypeptide reads, in one-letter code: FMN-dependent NADH:quinone oxidoreductase (198 aa).

FMN is bound by residues serine 10, 16 to 18 (SQS), 94 to 97 (MYNF), and 138 to 141 (TRGG).

The protein belongs to the azoreductase type 1 family. As to quaternary structure, homodimer. FMN serves as cofactor.

It carries out the reaction 2 a quinone + NADH + H(+) = 2 a 1,4-benzosemiquinone + NAD(+). It catalyses the reaction N,N-dimethyl-1,4-phenylenediamine + anthranilate + 2 NAD(+) = 2-(4-dimethylaminophenyl)diazenylbenzoate + 2 NADH + 2 H(+). Its function is as follows. Quinone reductase that provides resistance to thiol-specific stress caused by electrophilic quinones. Functionally, also exhibits azoreductase activity. Catalyzes the reductive cleavage of the azo bond in aromatic azo compounds to the corresponding amines. This chain is FMN-dependent NADH:quinone oxidoreductase, found in Shewanella baltica (strain OS185).